Reading from the N-terminus, the 235-residue chain is uncharacterized protein (235 aa).

Disordered regions lie at residues I20–K64 and S140–Q164. Composition is skewed to low complexity over residues N30–N60 and S140–N161. Residues K174–L213 adopt a coiled-coil conformation.

This is an uncharacterized protein from Dictyostelium discoideum (Social amoeba).